Consider the following 512-residue polypeptide: Maturase K (512 aa).

It belongs to the intron maturase 2 family. MatK subfamily.

The protein localises to the plastid. The protein resides in the chloroplast. In terms of biological role, usually encoded in the trnK tRNA gene intron. Probably assists in splicing its own and other chloroplast group II introns. This Platanus occidentalis (Sycamore) protein is Maturase K.